Reading from the N-terminus, the 657-residue chain is Iron-sulfur cluster biogenesis chaperone, mitochondrial (657 aa).

Belongs to the heat shock protein 70 family. In terms of assembly, interacts with the Fe/S cluster assembly proteins ISU1, MGE1, GRX5 and JAC1.

It localises to the mitochondrion matrix. The catalysed reaction is ATP + H2O = ADP + phosphate + H(+). Required for the assembly of iron-sulfur (Fe/S) clusters in mitochondria. Assisted by the DnaJ-like co-chaperone JAC1 and the nucleotide exchange factor MGE1, it mediates ATP-dependent Fe-S cluster transfer from the scaffold proteins ISU1/ISU2 to GRX5. The protein is Iron-sulfur cluster biogenesis chaperone, mitochondrial of Saccharomyces cerevisiae (strain ATCC 204508 / S288c) (Baker's yeast).